The primary structure comprises 559 residues: MVKSDIEIAQAAEELPITDVAAKLGLTSQDLEPYGYDKAKVNWQAIKRSEENGHLGKLILVTSISPTPAGEGKSTMTIGIGDAINNQLGKKTVIALREPSMGPVFGMKGGAAGGGYAQVIPMEDINLHFTGDMHALTSAIDNLSALVDNYIYQGNELGLDPEKIVIKRGLDVNDRTLRKVTIGQGSKFNGVERPASFQLTVGHELMAILCLSKDIADLKERIGKVLVGYTYEDEPVFVKDLGFQGAIAALLSTALKPNLVQTLEHTPAFVHGGPFANIAHGNNSILSTNLALHLSDYVLSEAGFGSDLGGQKFLDFVSTKLEKKPDAAVVVATVRALKYQAEKSTDHLKEENLDSLKEGFANLDRHMNNVRSYNIPVLVVINKFPTDTEAELDLLKSLIEEQGFPCEIVTAHDEGSKGAKAAAEKIVELADKSDYEIKRSYDLDDDLETKIEKVAKRIYHAADVEYTDKAKDQLVKLKKMGKDKLPVIIAKTQYSFTDNVKELGAPTGFTLHVKGLSLRNGAGFVVVSTGHILDMPGLPKHPAALDIDVDETGKISGLF.

Residue threonine 67–serine 74 coordinates ATP.

Belongs to the formate--tetrahydrofolate ligase family.

It carries out the reaction (6S)-5,6,7,8-tetrahydrofolate + formate + ATP = (6R)-10-formyltetrahydrofolate + ADP + phosphate. It participates in one-carbon metabolism; tetrahydrofolate interconversion. This chain is Formate--tetrahydrofolate ligase, found in Lactobacillus delbrueckii subsp. bulgaricus (strain ATCC 11842 / DSM 20081 / BCRC 10696 / JCM 1002 / NBRC 13953 / NCIMB 11778 / NCTC 12712 / WDCM 00102 / Lb 14).